A 559-amino-acid chain; its full sequence is Arginine--tRNA ligase (559 aa).

A 'HIGH' region motif is present at residues 116-126 (ANPNGPLHVGH).

It belongs to the class-I aminoacyl-tRNA synthetase family.

It localises to the cytoplasm. The catalysed reaction is tRNA(Arg) + L-arginine + ATP = L-arginyl-tRNA(Arg) + AMP + diphosphate. This chain is Arginine--tRNA ligase, found in Methanosphaerula palustris (strain ATCC BAA-1556 / DSM 19958 / E1-9c).